The chain runs to 169 residues: NADH-quinone oxidoreductase subunit B (169 aa).

The [4Fe-4S] cluster site is built by Cys-42, Cys-43, Cys-107, and Cys-136.

Belongs to the complex I 20 kDa subunit family. NDH-1 is composed of 14 different subunits. Subunits NuoB, C, D, E, F, and G constitute the peripheral sector of the complex. The cofactor is [4Fe-4S] cluster.

Its subcellular location is the cell inner membrane. The catalysed reaction is a quinone + NADH + 5 H(+)(in) = a quinol + NAD(+) + 4 H(+)(out). Its function is as follows. NDH-1 shuttles electrons from NADH, via FMN and iron-sulfur (Fe-S) centers, to quinones in the respiratory chain. The immediate electron acceptor for the enzyme in this species is believed to be ubiquinone. Couples the redox reaction to proton translocation (for every two electrons transferred, four hydrogen ions are translocated across the cytoplasmic membrane), and thus conserves the redox energy in a proton gradient. In Nitratiruptor sp. (strain SB155-2), this protein is NADH-quinone oxidoreductase subunit B.